A 133-amino-acid polypeptide reads, in one-letter code: Small ribosomal subunit protein uS8 (133 aa).

Belongs to the universal ribosomal protein uS8 family. In terms of assembly, part of the 30S ribosomal subunit. Contacts proteins S5 and S12.

In terms of biological role, one of the primary rRNA binding proteins, it binds directly to 16S rRNA central domain where it helps coordinate assembly of the platform of the 30S subunit. This is Small ribosomal subunit protein uS8 from Trichodesmium erythraeum (strain IMS101).